The following is a 431-amino-acid chain: Glucose-1-phosphate adenylyltransferase (431 aa).

K39 lines the beta-D-fructose 1,6-bisphosphate pocket. AMP-binding residues include R40, H46, and R52. An alpha-D-glucose 1-phosphate-binding site is contributed by Y114. Residue R130 participates in AMP binding. Alpha-D-glucose 1-phosphate contacts are provided by residues G179, 194–195, and S212; that span reads EK. 2 residues coordinate AMP: E370 and R386. Beta-D-fructose 1,6-bisphosphate-binding positions include 419–423 and 429–431; these read REMLR and QER.

It belongs to the bacterial/plant glucose-1-phosphate adenylyltransferase family. As to quaternary structure, homotetramer.

The enzyme catalyses alpha-D-glucose 1-phosphate + ATP + H(+) = ADP-alpha-D-glucose + diphosphate. It functions in the pathway glycan biosynthesis; glycogen biosynthesis. Its activity is regulated as follows. Allosterically activated by fructose-1,6-bisphosphate (F16BP) and inhibited by AMP. Involved in the biosynthesis of ADP-glucose, a building block required for the elongation reactions to produce glycogen. Catalyzes the reaction between ATP and alpha-D-glucose 1-phosphate (G1P) to produce pyrophosphate and ADP-Glc. The protein is Glucose-1-phosphate adenylyltransferase of Escherichia coli O45:K1 (strain S88 / ExPEC).